The chain runs to 505 residues: RNA-splicing ligase RtcB homolog (505 aa).

Mn(2+) contacts are provided by aspartate 119, cysteine 122, histidine 227, histidine 259, and histidine 353. 226-230 contributes to the GMP binding site; that stretch reads NHYGE. GMP-binding positions include 353–354, 402–405, serine 409, 428–431, and lysine 504; these read HN, GGTM, and HGAG. Histidine 428 (GMP-histidine intermediate) is an active-site residue.

The protein belongs to the RtcB family. As to quaternary structure, catalytic component of the tRNA-splicing ligase complex. Requires Mn(2+) as cofactor.

It catalyses the reaction a 3'-end 3'-phospho-ribonucleotide-RNA + a 5'-end dephospho-ribonucleoside-RNA + GTP = a ribonucleotidyl-ribonucleotide-RNA + GMP + diphosphate. The enzyme catalyses a 3'-end 2',3'-cyclophospho-ribonucleotide-RNA + a 5'-end dephospho-ribonucleoside-RNA + GTP + H2O = a ribonucleotidyl-ribonucleotide-RNA + GMP + diphosphate + H(+). Functionally, catalytic subunit of the tRNA-splicing ligase complex that acts by directly joining spliced tRNA halves to mature-sized tRNAs by incorporating the precursor-derived splice junction phosphate into the mature tRNA as a canonical 3',5'-phosphodiester. May act as an RNA ligase with broad substrate specificity, and may function toward other RNAs. The protein is RNA-splicing ligase RtcB homolog of Brugia malayi (Filarial nematode worm).